Here is a 162-residue protein sequence, read N- to C-terminus: 2-C-methyl-D-erythritol 2,4-cyclodiphosphate synthase (162 aa).

Residues Asp-10 and His-12 each contribute to the a divalent metal cation site. 4-CDP-2-C-methyl-D-erythritol 2-phosphate is bound by residues Asp-10–His-12 and His-36–Ser-37. Residue His-44 participates in a divalent metal cation binding. Residues Asp-58–Gly-60, Phe-63–Asp-67, and Arg-144 each bind 4-CDP-2-C-methyl-D-erythritol 2-phosphate.

This sequence belongs to the IspF family. In terms of assembly, homotrimer. It depends on a divalent metal cation as a cofactor.

It carries out the reaction 4-CDP-2-C-methyl-D-erythritol 2-phosphate = 2-C-methyl-D-erythritol 2,4-cyclic diphosphate + CMP. The protein operates within isoprenoid biosynthesis; isopentenyl diphosphate biosynthesis via DXP pathway; isopentenyl diphosphate from 1-deoxy-D-xylulose 5-phosphate: step 4/6. Its function is as follows. Involved in the biosynthesis of isopentenyl diphosphate (IPP) and dimethylallyl diphosphate (DMAPP), two major building blocks of isoprenoid compounds. Catalyzes the conversion of 4-diphosphocytidyl-2-C-methyl-D-erythritol 2-phosphate (CDP-ME2P) to 2-C-methyl-D-erythritol 2,4-cyclodiphosphate (ME-CPP) with a corresponding release of cytidine 5-monophosphate (CMP). The sequence is that of 2-C-methyl-D-erythritol 2,4-cyclodiphosphate synthase from Laribacter hongkongensis (strain HLHK9).